Here is a 260-residue protein sequence, read N- to C-terminus: 5-oxoprolinase subunit A (260 aa).

Belongs to the LamB/PxpA family. As to quaternary structure, forms a complex composed of PxpA, PxpB and PxpC.

It catalyses the reaction 5-oxo-L-proline + ATP + 2 H2O = L-glutamate + ADP + phosphate + H(+). Catalyzes the cleavage of 5-oxoproline to form L-glutamate coupled to the hydrolysis of ATP to ADP and inorganic phosphate. This Methylococcus capsulatus (strain ATCC 33009 / NCIMB 11132 / Bath) protein is 5-oxoprolinase subunit A.